The sequence spans 84 residues: U8-theraphotoxin-Hhn1c 3 (84 aa).

Positions 1–21 (MKVALIVCLVWVMAMMELVSC) are cleaved as a signal peptide. Disulfide bonds link Cys-23–Cys-35, Cys-29–Cys-44, Cys-34–Cys-67, Cys-54–Cys-75, and Cys-69–Cys-81.

The protein belongs to the AVIT (prokineticin) family. Expressed by the venom gland.

It localises to the secreted. The protein is U8-theraphotoxin-Hhn1c 3 of Cyriopagopus hainanus (Chinese bird spider).